The chain runs to 149 residues: Deoxyuridine 5'-triphosphate nucleotidohydrolase (149 aa).

Substrate is bound by residues 68 to 70, asparagine 81, 85 to 87, and methionine 95; these read RSG and LID.

Belongs to the dUTPase family. Mg(2+) serves as cofactor.

The enzyme catalyses dUTP + H2O = dUMP + diphosphate + H(+). It participates in pyrimidine metabolism; dUMP biosynthesis; dUMP from dCTP (dUTP route): step 2/2. This enzyme is involved in nucleotide metabolism: it produces dUMP, the immediate precursor of thymidine nucleotides and it decreases the intracellular concentration of dUTP so that uracil cannot be incorporated into DNA. The polypeptide is Deoxyuridine 5'-triphosphate nucleotidohydrolase (Polynucleobacter asymbioticus (strain DSM 18221 / CIP 109841 / QLW-P1DMWA-1) (Polynucleobacter necessarius subsp. asymbioticus)).